Reading from the N-terminus, the 162-residue chain is Disulfide bond formation protein B (162 aa).

The Cytoplasmic segment spans residues 1 to 10 (MGDWLLRRRG). Residues 11-27 (LALLLVLTLLLNLGALG) form a helical membrane-spanning segment. At 28 to 45 (LEYLADMPPCPLCWVQRG) the chain is on the periplasmic side. Cys-37 and Cys-40 are oxidised to a cystine. Residues 46–62 (VFGLMSLVALVGLVYFP) form a helical membrane-spanning segment. The Cytoplasmic portion of the chain corresponds to 63-68 (RGWGRW). The chain crosses the membrane as a helical span at residues 69–86 (PLAGALGLSALTGVIIAL). Over 87–140 (RHLYIQANPDAVSCGMSPEVLAQFLPWWEVLLEILSGTTDCTQVDAVLGVPLPG) the chain is Periplasmic. Cys-100 and Cys-127 are oxidised to a cystine. Residues 141 to 159 (WTLVGYLALGALGLYAVLA) traverse the membrane as a helical segment. At 160–162 (RRA) the chain is on the cytoplasmic side.

Belongs to the DsbB family.

The protein resides in the cell inner membrane. In terms of biological role, required for disulfide bond formation in some periplasmic proteins. Acts by oxidizing the DsbA protein. The polypeptide is Disulfide bond formation protein B (Alkalilimnicola ehrlichii (strain ATCC BAA-1101 / DSM 17681 / MLHE-1)).